The chain runs to 253 residues: MLKFVILLSAVACALGGTIPEGLLPQLDGRIVGGTATTISSFPWQISLQRSGSHSCGGSIYTDRVIVTAAHCLQSVSASSLQIRAGSSYWSSGGVTVKVSSFKNHEGYNPNTMVNDIAVIRLSSSLGFSSTIKSISLASSNPANGAAASVSGWGTQSSGSSSIPSQLQYVNVNIVSQSKCASSAYGYGSEIRNTMICAAASGKDACQGDSGGPLVSGGVLVGVVSWGYGCAYSNYPGVYASVADLRSWVINNA.

Positions 1-22 (MLKFVILLSAVACALGGTIPEG) are cleaved as a signal peptide. Residues 23–30 (LLPQLDGR) constitute a propeptide, activation peptide. A Peptidase S1 domain is found at 31 to 253 (IVGGTATTIS…DLRSWVINNA (223 aa)). A disulfide bridge links cysteine 56 with cysteine 72. Active-site charge relay system residues include histidine 71 and aspartate 116. 2 disulfide bridges follow: cysteine 180–cysteine 197 and cysteine 206–cysteine 230. Catalysis depends on serine 210, which acts as the Charge relay system.

The protein belongs to the peptidase S1 family.

The protein resides in the secreted. It localises to the extracellular space. It catalyses the reaction Preferential cleavage: Arg-|-Xaa, Lys-|-Xaa.. This is Trypsin beta (betaTry) from Drosophila erecta (Fruit fly).